The following is a 537-amino-acid chain: Glutamyl-tRNA(Gln) amidotransferase subunit A, chloroplastic/mitochondrial (537 aa).

Active-site charge relay system residues include K116 and S191. The active-site Acyl-ester intermediate is the S215.

It belongs to the amidase family. GatA subfamily. Subunit of the heterotrimeric GatCAB amidotransferase (AdT) complex, composed of A, B and C subunits.

It is found in the mitochondrion. Its subcellular location is the plastid. It localises to the chloroplast stroma. It catalyses the reaction L-glutamyl-tRNA(Gln) + L-glutamine + ATP + H2O = L-glutaminyl-tRNA(Gln) + L-glutamate + ADP + phosphate + H(+). Functionally, allows the formation of correctly charged Gln-tRNA(Gln) through the transamidation of misacylated Glu-tRNA(Gln) in chloroplasts and mitochondria. The reaction takes place in the presence of glutamine and ATP through an activated gamma-phospho-Glu-tRNA(Gln). This is Glutamyl-tRNA(Gln) amidotransferase subunit A, chloroplastic/mitochondrial from Arabidopsis thaliana (Mouse-ear cress).